Here is a 142-residue protein sequence, read N- to C-terminus: Large ribosomal subunit protein uL13 (142 aa).

This sequence belongs to the universal ribosomal protein uL13 family. In terms of assembly, part of the 50S ribosomal subunit.

Its function is as follows. This protein is one of the early assembly proteins of the 50S ribosomal subunit, although it is not seen to bind rRNA by itself. It is important during the early stages of 50S assembly. This Shewanella oneidensis (strain ATCC 700550 / JCM 31522 / CIP 106686 / LMG 19005 / NCIMB 14063 / MR-1) protein is Large ribosomal subunit protein uL13.